The primary structure comprises 991 residues: Integrator complex subunit 8 (991 aa).

Over residues 1–10 the composition is skewed to basic and acidic residues; sequence MSAEAADREA. The disordered stretch occupies residues 1–22; that stretch reads MSAEAADREAATSSRPCTPPQT. Positions 11–22 are enriched in polar residues; that stretch reads ATSSRPCTPPQT. The WFEF motif signature appears at 24–29; the sequence is WFEFLL. 4 TPR repeats span residues 250 to 288, 319 to 355, 569 to 602, and 829 to 862; these read CQGCYDLGAVYFLQGPTNPSCYEKARDHFFRTKQLVSKI, SQPATPYSQIHNFMKTNNYQGILKIFLEDHLNNSLPD, VYILLAKGLHCSAIKDYPRAKQLLSACLELVTEF, and HSWLTIQADIYFATNEYSAALNYYLQAGAVCSDF.

Belongs to the Integrator subunit 8 family. As to quaternary structure, component of the Integrator complex, composed of core subunits INTS1, INTS2, INTS3, INTS4, INTS5, INTS6, INTS7, INTS8, INTS9/RC74, INTS10, INTS11/CPSF3L, INTS12, INTS13, INTS14 and INTS15. The core complex associates with protein phosphatase 2A subunits PPP2CA and PPP2R1A, to form the Integrator-PP2A (INTAC) complex.

It localises to the nucleus. The protein localises to the chromosome. Functionally, component of the integrator complex, a multiprotein complex that terminates RNA polymerase II (Pol II) transcription in the promoter-proximal region of genes. The integrator complex provides a quality checkpoint during transcription elongation by driving premature transcription termination of transcripts that are unfavorably configured for transcriptional elongation: the complex terminates transcription by (1) catalyzing dephosphorylation of the C-terminal domain (CTD) of Pol II subunit POLR2A/RPB1 and SUPT5H/SPT5, (2) degrading the exiting nascent RNA transcript via endonuclease activity and (3) promoting the release of Pol II from bound DNA. The integrator complex is also involved in terminating the synthesis of non-coding Pol II transcripts, such as enhancer RNAs (eRNAs), small nuclear RNAs (snRNAs), telomerase RNAs and long non-coding RNAs (lncRNAs). Within the integrator complex, INTS8 is required for the recruitment of protein phosphatase 2A (PP2A) to transcription pause-release checkpoint. In Xenopus laevis (African clawed frog), this protein is Integrator complex subunit 8 (ints8).